The chain runs to 136 residues: Lipoprotein YghG (136 aa).

An N-terminal signal peptide occupies residues 1–24; the sequence is MSIKQMPGRVLISLLLSVTGLLSG. Cys-25 carries N-palmitoyl cysteine lipidation. Cys-25 is lipidated: S-diacylglycerol cysteine.

It belongs to the GspS/AspS pilotin family.

The protein resides in the cell outer membrane. Its function is as follows. Involved in a type II secretion system (T2SS, formerly general secretion pathway, GSP) for the export of folded proteins across the outer membrane. In a functional T2SS this subunit helps assemble the outer membrane channel. This Escherichia coli (strain K12) protein is Lipoprotein YghG (yghG).